We begin with the raw amino-acid sequence, 384 residues long: MNALDLPKAPHETRVVVAMSGGVDSSVVAGLLKRQGFDVVGVTLQLYDHGAASHRKGACCAGQDIHDARAAAEHLGIPHYVLDYEDRFRDEVIEKFAESYLAGETPIPCVECNRTVKFRDLLGLARDLDADALATGHYVASRALPGGGRALHRALDPARDQSYFLYATTAEQLDFLRFPLGEMEKTETRALAKELGLSLAEKPDSQDICFVPQGRYSDVIARLRPDAARPGEIVDLDGHVLGRHDGIVHYTVGQRKGLGLSGPEPLYVVRLEPDAARVVVGPRTALATTRIRLSDLNWLGEGPAEAVRDLPVAVRVRSTRPPRPATLTVGPDGAVEVVLAEPEDGVSPGQACAIYADDGPRARVLGGGTIRRVDALSARPREAA.

Residues 18-25 and Leu44 contribute to the ATP site; that span reads AMSGGVDS. Cys112 acts as the Nucleophile in catalysis. A disulfide bond links Cys112 and Cys209. Gly136 lines the ATP pocket. The interaction with tRNA stretch occupies residues 159–161; that stretch reads RDQ. The active-site Cysteine persulfide intermediate is the Cys209.

This sequence belongs to the MnmA/TRMU family.

The protein localises to the cytoplasm. It catalyses the reaction S-sulfanyl-L-cysteinyl-[protein] + uridine(34) in tRNA + AH2 + ATP = 2-thiouridine(34) in tRNA + L-cysteinyl-[protein] + A + AMP + diphosphate + H(+). Its function is as follows. Catalyzes the 2-thiolation of uridine at the wobble position (U34) of tRNA, leading to the formation of s(2)U34. This is tRNA-specific 2-thiouridylase MnmA from Methylobacterium radiotolerans (strain ATCC 27329 / DSM 1819 / JCM 2831 / NBRC 15690 / NCIMB 10815 / 0-1).